A 383-amino-acid polypeptide reads, in one-letter code: Probable protein phosphatase 2C 13 (383 aa).

Residues 78-349 (RSGSFADIRS…DNMTVIVICF (272 aa)) enclose the PPM-type phosphatase domain. Mn(2+) is bound by residues Asp121, Gly122, Asp297, and Asp340.

Belongs to the PP2C family. It depends on Mg(2+) as a cofactor. Requires Mn(2+) as cofactor.

It catalyses the reaction O-phospho-L-seryl-[protein] + H2O = L-seryl-[protein] + phosphate. The enzyme catalyses O-phospho-L-threonyl-[protein] + H2O = L-threonyl-[protein] + phosphate. This Arabidopsis thaliana (Mouse-ear cress) protein is Probable protein phosphatase 2C 13.